The sequence spans 72 residues: U10-myrmicitoxin-Tb1a (72 aa).

Residues 1 to 26 (MRVSYLSLTLTIVVVIAIIYAPETEA) form the signal peptide. A propeptide spanning residues 27 to 36 (KAWADADAEA) is cleaved from the precursor.

It belongs to the formicidae venom precursor-01 superfamily. As to expression, expressed by the venom gland.

The protein resides in the secreted. Functionally, in vivo, this neurotoxin paralyzes about 40% of blowflies (L.caesar) one hour after intrathoracic injection, when tested at high doses (28 nmol/g). This chain is U10-myrmicitoxin-Tb1a, found in Tetramorium bicarinatum (Tramp ant).